Here is a 316-residue protein sequence, read N- to C-terminus: MVTSTKIHRQHDSMGAVCKSYYQLTKPRIIPLLLITTAASMWIASEGRVDLPKLLITLLGGTLAAASAQTLNCIYDQDIDYEMLRTRARPIPAGKVQPRHALIFALALGVLSFALLATFVNVLSGCLALSGIVFYMLVYTHWLKRHTAQNIVIGGAAGSIPPLVGWAAVTGDLSWTPWVLFALIFLWTPPHFWALALMIKDDYAQVNVPMLPVIAGEEKTVSQIWYYSLLVVPFSLLLVYPLHQLGILYLAIAIILGGQFLVKAWQLKQAPGDRDLARGLFKFSIFYLMLLCLAMVIDSLPVTHQLVAQMGTLLLG.

9 consecutive transmembrane segments (helical) span residues 29–49 (IIPL…EGRV), 54–74 (LLIT…LNCI), 102–122 (LIFA…FVNV), 123–143 (LSGC…THWL), 151–171 (IVIG…AVTG), 179–199 (VLFA…ALMI), 224–241 (IWYY…LVYP), 245–267 (LGIL…AWQL), and 283–303 (FSIF…LPVT).

Belongs to the UbiA prenyltransferase family. Protoheme IX farnesyltransferase subfamily.

The protein localises to the cell inner membrane. The catalysed reaction is heme b + (2E,6E)-farnesyl diphosphate + H2O = Fe(II)-heme o + diphosphate. It functions in the pathway porphyrin-containing compound metabolism; heme O biosynthesis; heme O from protoheme: step 1/1. Converts heme B (protoheme IX) to heme O by substitution of the vinyl group on carbon 2 of heme B porphyrin ring with a hydroxyethyl farnesyl side group. This Synechocystis sp. (strain ATCC 27184 / PCC 6803 / Kazusa) protein is Protoheme IX farnesyltransferase.